The following is a 383-amino-acid chain: Micronemal protein 3 (383 aa).

Residues 1–26 (MRGGTSALLHALTFSGAVWMCTPAEA) form the signal peptide. The propeptide at 27–66 (LPIQKSVQLGSFDKVVPSREVVSESLAPSFAVTETHSSVQ) is required for proper sorting to micronemes. The interval 67–145 (SPSKQETQLC…HPDKSYGGDC (79 aa)) is lectin-like; required for the binding of host cells. Required for proper sorting to micronemes stretches follow at residues 146-189 (SCEK…SEDP), 190-236 (CSKR…KRTG), and 237-290 (CHAF…LAEK). Positions 186–227 (SEDPCSKRGNAKCGPNGTCIVVDSVSYTCTCGDGETLVNLPE) constitute an EGF-like domain. Disulfide bonds link Cys-190–Cys-204 and Cys-198–Cys-214. Asn-201 carries N-linked (GlcNAc...) asparagine glycosylation. Residues 294 to 359 (EFGISASSCK…HTVTCEKIKH (66 aa)) form an involved in dimerization region.

Homodimer; dimerization is likely required for host cell binding but not for trafficking to micronemes. Post-translationally, removal of the propeptide occurs in a post-medial-Golgi compartment. Removal of the propeptide is required for the host cell binding. The presence of propeptide does not affect dimerization. The presence of propeptide does not affect sorting to micronemes.

It is found in the cytoplasmic vesicle. Its subcellular location is the secretory vesicle. The protein resides in the microneme. The protein localises to the secreted. It localises to the golgi apparatus. It is found in the endoplasmic reticulum. Its function is as follows. Adhesin; can bind both the host cells and the parasites. May be involved in parasite invasion by acting as a bridge between the parasite and the host cell. Triggers innate immune responses in mouse macrophages via the TLR11/MyD88/NF-kappa-B pathway. Induces TNF/TNF-alpha secretion in mouse macrophages. Induces secretion of IL6 in mouse and human macrophages likely via different mechanisms. Up-regulates expression of NOS2/iNOS in mouse macrophages. Induces mouse macrophage polarization. The polypeptide is Micronemal protein 3 (Toxoplasma gondii).